Consider the following 354-residue polypeptide: Hyaluronan and proteoglycan link protein 1 (354 aa).

Positions 1–9 (MKSLLLLVL) are excised as a propeptide. Asn21 and Asn56 each carry an N-linked (GlcNAc...) asparagine glycan. The Ig-like V-type domain occupies 38 to 152 (PRLLVEAEQA…EGLEDDTAVV (115 aa)). Disulfide bonds link Cys61/Cys139, Cys181/Cys252, Cys205/Cys226, Cys279/Cys349, and Cys304/Cys325. 2 consecutive Link domains span residues 159–254 (VVFP…FCFT) and 259–351 (GRFY…YCFR).

Belongs to the HAPLN family.

It is found in the secreted. Its subcellular location is the extracellular space. It localises to the extracellular matrix. Its function is as follows. Stabilizes the aggregates of proteoglycan monomers with hyaluronic acid in the extracellular cartilage matrix. The chain is Hyaluronan and proteoglycan link protein 1 (HAPLN1) from Sus scrofa (Pig).